Reading from the N-terminus, the 487-residue chain is Malonate-semialdehyde dehydrogenase 2 (487 aa).

NAD(+) contacts are provided by phenylalanine 154, lysine 178, glutamate 181, arginine 182, and serine 231. The active-site Nucleophile is the cysteine 286. Glutamate 386 lines the NAD(+) pocket.

Belongs to the aldehyde dehydrogenase family. IolA subfamily. In terms of assembly, homotetramer.

The catalysed reaction is 3-oxopropanoate + NAD(+) + CoA + H2O = hydrogencarbonate + acetyl-CoA + NADH + H(+). The enzyme catalyses 2-methyl-3-oxopropanoate + NAD(+) + CoA + H2O = propanoyl-CoA + hydrogencarbonate + NADH + H(+). The protein operates within polyol metabolism; myo-inositol degradation into acetyl-CoA; acetyl-CoA from myo-inositol: step 7/7. In terms of biological role, catalyzes the oxidation of malonate semialdehyde (MSA) and methylmalonate semialdehyde (MMSA) into acetyl-CoA and propanoyl-CoA, respectively. Is involved in a myo-inositol catabolic pathway. Bicarbonate, and not CO2, is the end-product of the enzymatic reaction. This is Malonate-semialdehyde dehydrogenase 2 from Bacillus thuringiensis (strain Al Hakam).